The chain runs to 295 residues: Small ribosomal subunit biogenesis GTPase RsgA (295 aa).

Positions 68–228 constitute a CP-type G domain; it reads KNLLTKPHVA…VVDTPGFANL (161 aa). GTP contacts are provided by residues 117-120 and 170-178; these read NKMD and GLSGVGKSS. Zn(2+) is bound by residues C250, C255, H257, and C263.

This sequence belongs to the TRAFAC class YlqF/YawG GTPase family. RsgA subfamily. As to quaternary structure, monomer. Associates with 30S ribosomal subunit, binds 16S rRNA. The cofactor is Zn(2+).

It is found in the cytoplasm. Its function is as follows. One of several proteins that assist in the late maturation steps of the functional core of the 30S ribosomal subunit. Helps release RbfA from mature subunits. May play a role in the assembly of ribosomal proteins into the subunit. Circularly permuted GTPase that catalyzes slow GTP hydrolysis, GTPase activity is stimulated by the 30S ribosomal subunit. The sequence is that of Small ribosomal subunit biogenesis GTPase RsgA from Thermotoga maritima (strain ATCC 43589 / DSM 3109 / JCM 10099 / NBRC 100826 / MSB8).